The following is a 378-amino-acid chain: Spermidine/putrescine import ATP-binding protein PotA (378 aa).

The region spanning 18–248 (VQLAGIRKCF…PKNLFVAGFI (231 aa)) is the ABC transporter domain. ATP is bound at residue 50–57 (GPSGCGKT).

This sequence belongs to the ABC transporter superfamily. Spermidine/putrescine importer (TC 3.A.1.11.1) family. In terms of assembly, the complex is composed of two ATP-binding proteins (PotA), two transmembrane proteins (PotB and PotC) and a solute-binding protein (PotD).

It localises to the cell inner membrane. It catalyses the reaction ATP + H2O + polyamine-[polyamine-binding protein]Side 1 = ADP + phosphate + polyamineSide 2 + [polyamine-binding protein]Side 1.. Part of the ABC transporter complex PotABCD involved in spermidine/putrescine import. Responsible for energy coupling to the transport system. The polypeptide is Spermidine/putrescine import ATP-binding protein PotA (Escherichia coli O1:K1 / APEC).